Reading from the N-terminus, the 110-residue chain is UPF0060 membrane protein SACE_5620 (110 aa).

The next 4 membrane-spanning stretches (helical) occupy residues 8-28 (VVLFVLAAVAEIGGAWLVWQG), 34-54 (GLLWIGAGVIALGIYGFVATF), 63-83 (ILAAYGGVFVAGSLLWGVVVD), and 89-109 (RWDLIGATICLAGVAVIMYAP).

It belongs to the UPF0060 family.

The protein localises to the cell membrane. In Saccharopolyspora erythraea (strain ATCC 11635 / DSM 40517 / JCM 4748 / NBRC 13426 / NCIMB 8594 / NRRL 2338), this protein is UPF0060 membrane protein SACE_5620.